The following is a 578-amino-acid chain: Acyl-CoA ligase AFT1-1 (578 aa).

Residues 210–218 (SSGTSGAQK), 350–355 (QCYGAT), D438, R457, and K554 contribute to the ATP site. The tract at residues 281–350 (GVEDLLSIVE…RHHPTWKIKQ (70 aa)) is SBD1. The segment at 351–413 (CYGATEAGTA…VSSPSLAIGY (63 aa)) is SBD2. Residues 576-578 (SKI) carry the Peroxisomal targeting signal type 1 motif.

This sequence belongs to the ATP-dependent AMP-binding enzyme family.

It is found in the peroxisome. The protein operates within mycotoxin biosynthesis. Its function is as follows. Acyl-CoA ligase; part of the gene clusters that mediate the biosynthesis of the host-selective toxins (HSTs) AF-toxins responsible for Alternaria black spot of strawberry disease by the strawberry pathotype. AF-toxin I and III are valine derivatives of 2,3-dyhydroxy-isovaleric acid and 2-hydroxy-isovaleric acid respectively, while AF II is an isoleucine derivative of 2-hydroxy-valeric acid. These derivatives are bound to a 9,10-epoxy-8-hydroxy-9-methyl-decatrienoic acid (EDA) moiety. On cellular level, AF-toxins affect plasma membrane of susceptible cells and cause a sudden increase in loss of K(+) after a few minutes of toxin treatment. The aldo-keto reductase AFTS1 catalyzes the conversion of 2-keto-isovaleric acid (2-KIV) to 2-hydroxy-isovaleric acid (2-HIV) by reduction of its ketone to an alcohol. The acyl-CoA ligase AFT1, the hydrolase AFT2 and the enoyl-CoA hydratases AFT3 and AFT6, but also the polyketide synthase AFT9, the acyl-CoA dehydrogenase AFT10, the cytochrome P450 monooxygenase AFT11 and the oxidoreductase AFT12 are all involved in the biosynthesis of the AK-, AF- and ACT-toxin common EDA structural moiety. The exact role of each enzyme, and of additional enzymes identified within the AF-toxin clusters have still to be determined. This chain is Acyl-CoA ligase AFT1-1, found in Alternaria alternata (Alternaria rot fungus).